A 188-amino-acid chain; its full sequence is Der GTPase-activating protein YihI (188 aa).

Disordered regions lie at residues methionine 1–proline 80 and aspartate 162–phenylalanine 188. The segment covering threonine 27–aspartate 37 has biased composition (basic and acidic residues). A compositionally biased stretch (polar residues) spans asparagine 47–glycine 57.

It belongs to the YihI family. As to quaternary structure, interacts with Der.

In terms of biological role, a GTPase-activating protein (GAP) that modifies Der/EngA GTPase function. May play a role in ribosome biogenesis. This Yersinia pseudotuberculosis serotype O:3 (strain YPIII) protein is Der GTPase-activating protein YihI.